Consider the following 305-residue polypeptide: Aspartate carbamoyltransferase catalytic subunit (305 aa).

2 residues coordinate carbamoyl phosphate: Arg58 and Thr59. Lys86 is a binding site for L-aspartate. 3 residues coordinate carbamoyl phosphate: Arg108, His136, and Gln139. 2 residues coordinate L-aspartate: Arg169 and Arg223. Residues Gly264 and Pro265 each coordinate carbamoyl phosphate.

Belongs to the aspartate/ornithine carbamoyltransferase superfamily. ATCase family. As to quaternary structure, heterododecamer (2C3:3R2) of six catalytic PyrB chains organized as two trimers (C3), and six regulatory PyrI chains organized as three dimers (R2).

The enzyme catalyses carbamoyl phosphate + L-aspartate = N-carbamoyl-L-aspartate + phosphate + H(+). The protein operates within pyrimidine metabolism; UMP biosynthesis via de novo pathway; (S)-dihydroorotate from bicarbonate: step 2/3. Catalyzes the condensation of carbamoyl phosphate and aspartate to form carbamoyl aspartate and inorganic phosphate, the committed step in the de novo pyrimidine nucleotide biosynthesis pathway. The sequence is that of Aspartate carbamoyltransferase catalytic subunit from Syntrophobacter fumaroxidans (strain DSM 10017 / MPOB).